The sequence spans 369 residues: UDP-N-acetylglucosamine--N-acetylmuramyl-(pentapeptide) pyrophosphoryl-undecaprenol N-acetylglucosamine transferase (369 aa).

UDP-N-acetyl-alpha-D-glucosamine is bound by residues 10–12 (TAG), asparagine 124, arginine 161, serine 195, and glutamine 295.

The protein belongs to the glycosyltransferase 28 family. MurG subfamily.

The protein resides in the cell membrane. The catalysed reaction is di-trans,octa-cis-undecaprenyl diphospho-N-acetyl-alpha-D-muramoyl-L-alanyl-D-glutamyl-meso-2,6-diaminopimeloyl-D-alanyl-D-alanine + UDP-N-acetyl-alpha-D-glucosamine = di-trans,octa-cis-undecaprenyl diphospho-[N-acetyl-alpha-D-glucosaminyl-(1-&gt;4)]-N-acetyl-alpha-D-muramoyl-L-alanyl-D-glutamyl-meso-2,6-diaminopimeloyl-D-alanyl-D-alanine + UDP + H(+). Its pathway is cell wall biogenesis; peptidoglycan biosynthesis. In terms of biological role, cell wall formation. Catalyzes the transfer of a GlcNAc subunit on undecaprenyl-pyrophosphoryl-MurNAc-pentapeptide (lipid intermediate I) to form undecaprenyl-pyrophosphoryl-MurNAc-(pentapeptide)GlcNAc (lipid intermediate II). This chain is UDP-N-acetylglucosamine--N-acetylmuramyl-(pentapeptide) pyrophosphoryl-undecaprenol N-acetylglucosamine transferase, found in Acidothermus cellulolyticus (strain ATCC 43068 / DSM 8971 / 11B).